Consider the following 662-residue polypeptide: Interferon-induced GTP-binding protein Mx1 (662 aa).

Met-1 carries the post-translational modification N-acetylmethionine. The Dynamin-type G domain maps to 67–340 (DLALPAIAVI…LITHICKSLP (274 aa)). The tract at residues 77 to 84 (GDQSSGKS) is G1 motif. 77–84 (GDQSSGKS) serves as a coordination point for GTP. Residues 102-104 (VTR) are G2 motif. A G3 motif region spans residues 178 to 181 (DLPG). GTP-binding positions include 178-182 (DLPGI) and 247-250 (TKPD). Residues 247 to 250 (TKPD) are G4 motif. The tract at residues 279–282 (KCRG) is G5 motif. The segment at 341 to 366 (LLENQIRESHQRITEELQKYGVDVPE) is bundle signaling element (BSE). Residues 366–533 (EDENEKMFFL…HFQMEQIVYC (168 aa)) are middle domain. Positions 367 to 632 (DENEKMFFLI…KDTYSWLLKE (266 aa)) are stalk. The tract at residues 554–557 (KKKK) is critical for lipid-binding. The GED domain maps to 574–662 (MEEIFQHLMA…ARRRLAQFPG (89 aa)).

Belongs to the TRAFAC class dynamin-like GTPase superfamily. Dynamin/Fzo/YdjA family. Homooligomer. Oligomerizes into multimeric filamentous or ring-like structures by virtue of its stalk domain. Oligomerization is critical for GTPase activity, protein stability, and recognition of viral target structures. Interacts with TRPC1, TRPC3, TRPC4, TRPC5, TRPC6 and TRPC7. Interacts with HSPA5. Interacts with TUBB/TUBB5. Interacts with DDX39A and DDX39B. In terms of processing, ISGylated.

It localises to the cytoplasm. The protein localises to the endoplasmic reticulum membrane. Its subcellular location is the perinuclear region. Its function is as follows. Interferon-induced dynamin-like GTPase with antiviral activity. In Pongo abelii (Sumatran orangutan), this protein is Interferon-induced GTP-binding protein Mx1 (MX1).